A 220-amino-acid polypeptide reads, in one-letter code: Large ribosomal subunit protein uL3 (220 aa).

A disordered region spans residues 145 to 169; it reads GPASHGSKFHRRPGSSGNRTWPGRV.

This sequence belongs to the universal ribosomal protein uL3 family. Part of the 50S ribosomal subunit. Forms a cluster with proteins L14 and L19.

Functionally, one of the primary rRNA binding proteins, it binds directly near the 3'-end of the 23S rRNA, where it nucleates assembly of the 50S subunit. This Bdellovibrio bacteriovorus (strain ATCC 15356 / DSM 50701 / NCIMB 9529 / HD100) protein is Large ribosomal subunit protein uL3.